Here is a 209-residue protein sequence, read N- to C-terminus: Uracil phosphoribosyltransferase (209 aa).

5-phospho-alpha-D-ribose 1-diphosphate is bound by residues Arg-79, Arg-104, and 131-139 (DPMLATGGS). Uracil-binding positions include Ile-194 and 199-201 (GDA). Asp-200 contacts 5-phospho-alpha-D-ribose 1-diphosphate.

This sequence belongs to the UPRTase family. The cofactor is Mg(2+).

The catalysed reaction is UMP + diphosphate = 5-phospho-alpha-D-ribose 1-diphosphate + uracil. It functions in the pathway pyrimidine metabolism; UMP biosynthesis via salvage pathway; UMP from uracil: step 1/1. Its activity is regulated as follows. Allosterically activated by GTP. Catalyzes the conversion of uracil and 5-phospho-alpha-D-ribose 1-diphosphate (PRPP) to UMP and diphosphate. The protein is Uracil phosphoribosyltransferase of Shouchella clausii (strain KSM-K16) (Alkalihalobacillus clausii).